We begin with the raw amino-acid sequence, 140 residues long: UPF0102 protein Ppro_1186 (140 aa).

Residues Met-1–Gly-27 form a disordered region. Residues Glu-10–Ser-25 are compositionally biased toward polar residues.

This sequence belongs to the UPF0102 family.

This chain is UPF0102 protein Ppro_1186, found in Pelobacter propionicus (strain DSM 2379 / NBRC 103807 / OttBd1).